Here is a 396-residue protein sequence, read N- to C-terminus: Elongation factor Tu (396 aa).

Positions 10-205 (KPHVNIGTIG…AVDESIPAPV (196 aa)) constitute a tr-type G domain. The G1 stretch occupies residues 19-26 (GHVDHGKT). A GTP-binding site is contributed by 19–26 (GHVDHGKT). Position 26 (threonine 26) interacts with Mg(2+). Residues 62–66 (GITIN) are G2. The G3 stretch occupies residues 83-86 (DAPG). GTP is bound by residues 83-87 (DAPGH) and 138-141 (NKSD). Positions 138 to 141 (NKSD) are G4. Positions 175-177 (SAL) are G5.

The protein belongs to the TRAFAC class translation factor GTPase superfamily. Classic translation factor GTPase family. EF-Tu/EF-1A subfamily. As to quaternary structure, monomer.

Its subcellular location is the cytoplasm. The catalysed reaction is GTP + H2O = GDP + phosphate + H(+). Functionally, GTP hydrolase that promotes the GTP-dependent binding of aminoacyl-tRNA to the A-site of ribosomes during protein biosynthesis. The chain is Elongation factor Tu from Mycobacterium leprae (strain Br4923).